The sequence spans 298 residues: uncharacterized protein (298 aa).

This is an uncharacterized protein from Acanthamoeba polyphaga mimivirus (APMV).